Reading from the N-terminus, the 35-residue chain is Cupiennin-2a (35 aa).

The residue at position 35 (lysine 35) is a Lysine amide.

Expressed by the venom gland.

The protein localises to the secreted. This Cupiennius salei (American wandering spider) protein is Cupiennin-2a.